Consider the following 111-residue polypeptide: 2Fe-2S ferredoxin (111 aa).

Positions 1-104 (MPKIFFLPHK…DIEVQIPLYN (104 aa)) constitute a 2Fe-2S ferredoxin-type domain. Positions 42, 48, 51, and 87 each coordinate [2Fe-2S] cluster.

It belongs to the adrenodoxin/putidaredoxin family. Requires [2Fe-2S] cluster as cofactor.

Ferredoxin are iron-sulfur proteins that transfer electrons in a wide variety of metabolic reactions. This is 2Fe-2S ferredoxin (fdx) from Buchnera aphidicola subsp. Schizaphis graminum (strain Sg).